The following is a 737-amino-acid chain: Prospero homeobox protein 1 (737 aa).

The interval 1 to 28 is interaction with RORG; the sequence is MPDHDSTALLSRQTKRRRVDIGVKRTVG. The segment covering 103 to 135 has biased composition (polar residues); the sequence is KNGGTEPSFQASGLSSTGSEVHQEDICSNSSRD. The segment at 103–149 is disordered; the sequence is KNGGTEPSFQASGLSSTGSEVHQEDICSNSSRDSPPECLSPFGRPTM. Phosphoserine occurs at positions 177, 179, and 199. The interval 178–242 is disordered; that stretch reads HSPSVALRGN…REERRQLKQQ (65 aa). Residues 213 to 223 show a composition bias toward low complexity; sequence LPQQQQQSFQQ. Residues 227 to 242 are compositionally biased toward basic and acidic residues; sequence ARKEQKREERRQLKQQ. Phosphoserine occurs at positions 291 and 295. The span at 320–337 shows a compositional bias: basic and acidic residues; that stretch reads MAENKPKREGNNKERDHG. Disordered stretches follow at residues 320 to 344 and 445 to 476; these read MAEN…LQPE and KNSS…TGFT. A Glycyl lysine isopeptide (Lys-Gly) (interchain with G-Cter in SUMO2) cross-link involves residue K324. A compositionally biased stretch (polar residues) spans 464–476; it reads LHQSPLSATTGFT. Phosphoserine is present on residues S511, S514, and S557. The region spanning 577–635 is the Prospero-type homeo domain; the sequence is QEGLSPNHLKKAKLMFFYTRYPSSNMLKTYFSDVKFNRCITSQLIKWFSNFREFYYIQM. The interval 577–735 is homeo-Prospero; the sequence is QEGLSPNHLK…KSPNCLQELL (159 aa). Residues 636 to 735 form the Prospero domain; it reads EKYARQAIND…KSPNCLQELL (100 aa). Residues 723–729 are essential for nuclear localization, interaction with RORG, repression of RORG transcriptional activator activity; sequence EIFKSPN.

The protein belongs to the Prospero homeodomain family. Interacts with RORA and RORG (via AF-2 motif). As to expression, most actively expressed in the developing lens. Detected also in embryonic brain, lung, liver and kidney. In adult, it is more abundant in heart and liver than in brain, skeletal muscle, kidney and pancreas.

The protein localises to the nucleus. Transcription factor involved in developmental processes such as cell fate determination, gene transcriptional regulation and progenitor cell regulation in a number of organs. Plays a critical role in embryonic development and functions as a key regulatory protein in neurogenesis and the development of the heart, eye lens, liver, pancreas and the lymphatic system. Involved in the regulation of the circadian rhythm. Represses: transcription of the retinoid-related orphan receptor RORG, transcriptional activator activity of RORA and RORG and the expression of RORA/G-target genes including core clock components: BMAL1, NPAS2 and CRY1 and metabolic genes: AVPR1A and ELOVL3. The protein is Prospero homeobox protein 1 (PROX1) of Homo sapiens (Human).